The sequence spans 676 residues: Polyunsaturated fatty acid lipoxygenase ALOX15B (676 aa).

The PLAT domain maps to 2–124 (AEFRVRVSTG…TLVLQEGTAK (123 aa)). Residues glycine 15, glycine 17, aspartate 39, asparagine 40, glycine 42, glutamate 44, aspartate 85, and alanine 86 each coordinate Ca(2+). The 552-residue stretch at 125 to 676 (VSWADHHPVL…PPLIENSVSI (552 aa)) folds into the Lipoxygenase domain. Residues histidine 373, histidine 378, histidine 553, and isoleucine 676 each coordinate Fe cation.

This sequence belongs to the lipoxygenase family. It depends on Fe cation as a cofactor. In terms of tissue distribution, expressed in hair, prostate, lung, ovary, lymph node, spinal cord and cornea.

Its subcellular location is the nucleus. The protein localises to the cytoplasm. It localises to the cytosol. It is found in the cell membrane. The protein resides in the cytoskeleton. Its subcellular location is the membrane. The protein localises to the cell junction. It localises to the adherens junction. It is found in the focal adhesion. It carries out the reaction (5Z,8Z,11Z,14Z)-eicosatetraenoate + O2 = (15S)-hydroperoxy-(5Z,8Z,11Z,13E)-eicosatetraenoate. The catalysed reaction is (9Z,12Z)-octadecadienoate + O2 = 13-hydroperoxy-(9Z,11E)-octadecadienoate. It catalyses the reaction (5S)-hydroxy-(6E,8Z,11Z,14Z)-eicosatetraenoate + O2 = (5S)-hydroxy-(15S)-hydroperoxy-(6E,8Z,11Z,13E)-eicosatetraenoate. The enzyme catalyses (5Z,8Z,11Z,14Z)-eicosatetraenoate + O2 = 5-hydroperoxy-(6E,8Z,11Z,14Z)-eicosatetraenoate. It carries out the reaction (5S,6R)-dihydroxy-(7E,9E,11Z,14Z)-eicosatetraenoate + O2 = (5S,6R)-dihydroxy-(15S)-hydroperoxy-(7E,9E,11Z,13E)-eicosatetraenoate. The catalysed reaction is (5S)-hydroperoxy-(6E,8Z,11Z,14Z)-eicosatetraenoate + O2 = (5S,15S)-dihydroperoxy-(6E,8Z,11Z,13E)-eicosatetraenoate. It catalyses the reaction 2-(5Z,8Z,11Z,14Z-eicosatetraenoyl)-glycerol + O2 = 2-[15(S)-hydroperoxy-(5Z,8Z,11Z,13E)-eicosatetraenoyl]-glycerol. The enzyme catalyses (8S)-hydroperoxy-(5Z,9E,11Z,14Z)-eicosatetraenoate + O2 = (8S,15S)-dihydroperoxy-(5Z,9E,11Z,13E)-eicosatetraenoate. It carries out the reaction N-(5Z,8Z,11Z,14Z)-eicosatetraenoyl-L-alanine + O2 = N-(15S)-hydroperoxy-(5Z,8Z,11Z,13E)-eicosatetraenoyl-alanine. The catalysed reaction is N-(5Z,8Z,11Z,14Z)-eicosatetraenoyl-gamma-aminobutanoate + O2 = N-(15S)-hydroperoxy-(5Z,8Z,11Z,13E)-eicosatetraenoyl-gamma-aminobutanoate. It catalyses the reaction N-(5Z,8Z,11Z,14Z)-eicosatetraenoyl-glycine + O2 = N-(15S)-hydroperoxy-(5Z,8Z,11Z,13E)-eicosatetraenoyl-glycine. The enzyme catalyses N-(5Z,8Z,11Z,14Z)-eicosatetraenoyl-taurine + O2 = N-(15S)-hydroperoxy-(5Z,8Z,11Z,13E)-eicosatetraenoyl-taurine. It carries out the reaction 2-(5Z,8Z,11Z,14Z-eicosatetraenoyl)-glycerol + O2 = 2-[12-hydroperoxy-(5Z,8Z,10E,14Z)-eicosatetraenoyl]-glycerol. The catalysed reaction is 1-octadecanoyl-2-(5Z,8Z,11Z,14Z-eicosatetraenoyl)-sn-glycero-3-phosphocholine + O2 = 1-octadecanoyl-2-(15-hydroperoxy-5Z,8Z,11Z,13E-eicosatetraenoyl)-sn-glycero-3-phosphocholine. It catalyses the reaction a 1-acyl-2-(5Z,8Z,11Z,14Z-eicosatetraenoyl)-sn-glycero-3-phospho-(1D-myo-inositol) + O2 = a 1-acyl-2-(15-hydroperoxy-5Z,8Z,11Z,13E-eicosatetraenoyl)-sn-glycero-3-phospho-(1D-myo-inositol). The enzyme catalyses a 1-acyl-2-(8Z,11Z,14Z-eicosatrienoyl)-sn-glycero-3-phospho-(1D-myo-inositol) + O2 = a 1-acyl-2-(15-hydroperoxy-8Z,11Z,13E-eicosatrienoyl)-sn-glycero-3-phospho-(1D-myo-inositol). It carries out the reaction 1-octadecanoyl-2-(5Z,8Z,11Z,14Z)-eicosatetraenoyl-sn-glycero-3-phosphoethanolamine + O2 = 1-octadecanoyl-2-(15-hydroperoxy-5Z,8Z,11Z,13E-eicosatetraenoyl)-sn-glycero-3-phosphoethanolamine. The catalysed reaction is 1-octadecanoyl-2-(5Z,8Z,11Z,14Z-eicosatetraenoyl)-sn-glycero-3-phospho-(1D-myo-inositol) + O2 = 1-octadecanoyl-2-(15-hydroperoxy-5Z,8Z,11Z,13E-eicosatetraenoyl)-sn-glycero-3-phospho-(1D-myo-inositol). It catalyses the reaction (8Z,11Z,14Z)-eicosatrienoate + O2 = 15-hydroperoxy-(8Z,11Z,13E)-eicosatrienoate. The enzyme catalyses (7S)-hydroperoxy-(4Z,8E,10Z,13Z,16Z,19Z)-docosahexaenoate + O2 = (7S,17S)-dihydroperoxy-(4Z,8E,10Z,13Z,15E,19Z)-docosahexaenoate. It carries out the reaction (5Z,8Z,11Z,14Z)-eicosatetraenoate + O2 = 15-hydroperoxy-(5Z,8Z,11Z,13E)-eicosatetraenoate. It functions in the pathway lipid metabolism; hydroperoxy eicosatetraenoic acid biosynthesis. Non-heme iron-containing dioxygenase that catalyzes the stereo-specific peroxidation of free and esterified polyunsaturated fatty acids (PUFAs) generating a spectrum of bioactive lipid mediators. It inserts peroxyl groups at C15 of arachidonate ((5Z,8Z,11Z,14Z)-eicosatetraenoate) producing (15S)-hydroperoxyeicosatetraenoate/(15S)-HPETE. Also peroxidizes linoleate ((9Z,12Z)-octadecadienoate) to 13-hydroperoxyoctadecadienoate/13-HPODE. Oxygenates arachidonyl derivatives such as 2-arachidonoylglycerol (2-AG) leading to the production and extracellular release of 15-hydroxyeicosatetraenoyl glycerol (15-HETE-G) that acts as a peroxisome proliferator-activated receptor alpha agonist. Has the ability to efficiently class-switch ALOX5 pro-inflammatory mediators into anti-inflammatory intermediates. Participates in the sequential oxidations of DHA ((4Z,7Z,10Z,13Z,16Z,19Z)-docosahexaenoate) to generate specialized pro-resolving mediators (SPMs) resolvin D5 ((7S,17S)-diHPDHA), which can actively down-regulate the immune response and have anti-aggregation properties with platelets. In addition to free PUFAs hydrolyzed from phospholipids, it directly oxidizes PUFAs esterified to membrane-bound phospholipids. Has no detectable 8S-lipoxygenase activity on arachidonate but reacts with (8S)-HPETE to produce (8S,15S)-diHPETE. May regulate progression through the cell cycle and cell proliferation. May also regulate cytokine secretion by macrophages and therefore play a role in the immune response. May also regulate macrophage differentiation into proatherogenic foam cells. Functionally, does not convert arachidonic acid to 15S-hydroperoxyeicosatetraenoic acid/(15S)-HPETE. The chain is Polyunsaturated fatty acid lipoxygenase ALOX15B from Homo sapiens (Human).